A 284-amino-acid polypeptide reads, in one-letter code: Homeobox protein CDX-4 (284 aa).

Disordered regions lie at residues 15-40 (PGTL…SPMP) and 120-155 (GGGT…SRHS). Over residues 22–37 (GGDGTAGTGGTGGGGS) the composition is skewed to gly residues. Residues 173–232 (KEKYRVVYTDHQRLELEKEFHCNRYITIQRKSELAVNLGLSERQVKIWFQNRRAKERKMI) constitute a DNA-binding region (homeobox). Residues 238 to 253 (QFENSGGSVQSDSDSI) are compositionally biased toward polar residues. Positions 238–259 (QFENSGGSVQSDSDSISPGELP) are disordered.

The protein belongs to the Caudal homeobox family.

It is found in the nucleus. This Homo sapiens (Human) protein is Homeobox protein CDX-4 (CDX4).